The chain runs to 283 residues: Foldase protein PrsA 3 (283 aa).

Residues 1-21 (MKKKKLFLGTIISCVVLALSA) form the signal peptide. Residue C22 is the site of N-palmitoyl cysteine attachment. The S-diacylglycerol cysteine moiety is linked to residue C22. One can recognise a PpiC domain in the interval 132–222 (KPEMKVSHIL…YGYHIIKVTD (91 aa)).

Belongs to the PrsA family.

It is found in the cell membrane. It carries out the reaction [protein]-peptidylproline (omega=180) = [protein]-peptidylproline (omega=0). Plays a major role in protein secretion by helping the post-translocational extracellular folding of several secreted proteins. Important for the secretion of the protective antigen. The three PsrA proteins in this organism show different but overlapping substrate specificities. This chain is Foldase protein PrsA 3 (prsA3), found in Bacillus anthracis.